The chain runs to 347 residues: Ornithine carbamoyltransferase (347 aa).

Residues 56-59 (STRT), Gln83, Arg107, and 134-137 (HPTQ) each bind carbamoyl phosphate. L-ornithine is bound by residues Asn168, Asp232, and 236-237 (SM). Carbamoyl phosphate is bound by residues 274–275 (CL) and Arg320.

The protein belongs to the aspartate/ornithine carbamoyltransferase superfamily. OTCase family.

Its subcellular location is the cytoplasm. The catalysed reaction is carbamoyl phosphate + L-ornithine = L-citrulline + phosphate + H(+). Reversibly catalyzes the transfer of the carbamoyl group from carbamoyl phosphate (CP) to the N(epsilon) atom of ornithine (ORN) to produce L-citrulline. The protein is Ornithine carbamoyltransferase of Blochmanniella floridana.